Here is an 81-residue protein sequence, read N- to C-terminus: MKNVSQVSVAVLLIFSILVLGIGVQGKVPCLSRMFNKNNTCSFLRCEANCARKYKGYGDCRPGDRPHDKKDSLFCFCNYPC.

A signal peptide spans 1-26; it reads MKNVSQVSVAVLLIFSILVLGIGVQG. 4 disulfide bridges follow: Cys30–Cys81, Cys41–Cys60, Cys46–Cys75, and Cys50–Cys77.

The protein belongs to the DEFL family.

The protein localises to the secreted. The polypeptide is Defensin-like protein 153 (LCR31) (Arabidopsis thaliana (Mouse-ear cress)).